A 268-amino-acid polypeptide reads, in one-letter code: Tryptophan synthase alpha chain (268 aa).

Catalysis depends on proton acceptor residues E49 and D60.

This sequence belongs to the TrpA family. Tetramer of two alpha and two beta chains.

The catalysed reaction is (1S,2R)-1-C-(indol-3-yl)glycerol 3-phosphate + L-serine = D-glyceraldehyde 3-phosphate + L-tryptophan + H2O. It participates in amino-acid biosynthesis; L-tryptophan biosynthesis; L-tryptophan from chorismate: step 5/5. In terms of biological role, the alpha subunit is responsible for the aldol cleavage of indoleglycerol phosphate to indole and glyceraldehyde 3-phosphate. This is Tryptophan synthase alpha chain from Pseudomonas aeruginosa (strain ATCC 15692 / DSM 22644 / CIP 104116 / JCM 14847 / LMG 12228 / 1C / PRS 101 / PAO1).